The sequence spans 272 residues: uncharacterized protein (272 aa).

The HTH merR-type domain occupies 1 to 27 (MDTLAFINRALVEEGYSLKDIKLVLIT).

This is an uncharacterized protein from Aquifex aeolicus (strain VF5).